Reading from the N-terminus, the 363-residue chain is Type-2 angiotensin II receptor (363 aa).

At 1–45 the chain is on the extracellular side; the sequence is MKDNFSFAATSRNITSSRPFDNLNATGTNESAFNCSHKPSDKHLE. 5 N-linked (GlcNAc...) asparagine glycosylation sites follow: N4, N13, N24, N29, and N34. 2 disulfides stabilise this stretch: C35-C290 and C117-C195. The chain crosses the membrane as a helical span at residues 46-70; sequence AIPVLYYMIFVIGFAVNIVVVSLFC. At 71–80 the chain is on the cytoplasmic side; sequence CQKGPKKVSS. The helical transmembrane segment at 81-104 threads the bilayer; it reads IYIFNLALADLLLLATLPLWATYY. Residues Y103 and Y104 each contribute to the angiotensin II site. The Extracellular portion of the chain corresponds to 105–114; it reads SYRYDWLFGP. Residues 115–140 traverse the membrane as a helical segment; it reads VMCKVFGSFLTLNMFASIFFITCMSV. Residues 141-159 are Cytoplasmic-facing; that stretch reads DRYQSVIYPFLSQRRNPWQ. The chain crosses the membrane as a helical span at residues 160–181; it reads ASYVVPLVWCMACLSSLPTFYF. Angiotensin II contacts are provided by R182, Y204, and K215. Topologically, residues 182–206 are extracellular; that stretch reads RDVRTIEYLGVNACIMAFPPEKYAQ. The chain crosses the membrane as a helical span at residues 207-232; sequence WSAGIALMKNILGFIIPLIFIATCYF. The Cytoplasmic portion of the chain corresponds to 233-257; that stretch reads GIRKHLLKTNSYGKNRITRDQVLKM. Residues 258–281 traverse the membrane as a helical segment; it reads AAAVVLAFIICWLPFHVLTFLDAL. Position 279 (D279) interacts with angiotensin II. The Extracellular portion of the chain corresponds to 282–294; that stretch reads TWMGIINSCEVIA. A helical transmembrane segment spans residues 295–320; it reads VIDLALPFAILLGFTNSCVNPFLYCF. Position 297 (D297) interacts with angiotensin II. At 321 to 363 the chain is on the cytoplasmic side; sequence VGNRFQQKLRSVFRVPITWLQGKRETMSCRKGSSLREMDTFVS. Residues 324–333 form a helix VIII region; it reads RFQQKLRSVF. S354 bears the Phosphoserine; by PKC mark.

The protein belongs to the G-protein coupled receptor 1 family. As to quaternary structure, interacts with MTUS1. In terms of tissue distribution, expressed at highest levels in adrenal gland and uterus.

It localises to the cell membrane. Functionally, receptor for angiotensin II, a vasoconstricting peptide. Signals primarily via a non-canonical G-protein- and beta-arrestin independent pathways. Cooperates with MTUS1 to inhibit ERK2 activation and cell proliferation. This chain is Type-2 angiotensin II receptor, found in Mus musculus (Mouse).